Reading from the N-terminus, the 669-residue chain is RNA-binding protein 14 (669 aa).

RRM domains lie at 1 to 73 (MKIF…MSRP) and 79 to 149 (WKIF…LSTK). Residues lysine 126, lysine 135, lysine 138, lysine 149, and lysine 153 each participate in a glycyl lysine isopeptide (Lys-Gly) (interchain with G-Cter in SUMO2) cross-link. Disordered regions lie at residues 147–175 (STKG…DTAF) and 193–232 (NSTG…PLTA). Position 161 is a phosphoserine (serine 161). At lysine 164 the chain carries N6-acetyllysine; alternate. A Glycyl lysine isopeptide (Lys-Gly) (interchain with G-Cter in SUMO2); alternate cross-link involves residue lysine 164. Phosphothreonine is present on threonine 206. Phosphoserine is present on residues serine 220, serine 242, serine 244, serine 256, serine 272, and serine 280. Residues 284-303 (PYRGQLASPSSQSAAASSLG) form a disordered region. The span at 287–303 (GQLASPSSQSAAASSLG) shows a compositional bias: low complexity. The tract at residues 307-354 (GAQPSASALSSYGGQAAAASSLNSYGAQGSSLASYGNQPSSYGAQAAS) is TRBP-interacting domain; interaction with STIL. Residues serine 520, serine 523, serine 527, and serine 562 each carry the phosphoserine modification. The interval 566–590 (VANANSTPPPYERTRLSPPRASYDD) is disordered. Residue threonine 572 is modified to Phosphothreonine. Position 582 is a phosphoserine (serine 582). Lysine 600 is covalently cross-linked (Glycyl lysine isopeptide (Lys-Gly) (interchain with G-Cter in SUMO2)). 6 positions are modified to phosphoserine: serine 618, serine 620, serine 623, serine 627, serine 643, and serine 649.

As to quaternary structure, isoform 1: Interacts with NCOA6, CITED1 and XRCC5/KU86. Isoform 1: Interacts with SS18 isoform 1. Isoform 1: Interacts with SS18 isoform 2. Interacts with STIL and interferes with its interaction with CPAP. Interacts with gamma-tubulin. Part of the HDP-RNP complex composed of at least HEXIM1, PRKDC, XRCC5, XRCC6, paraspeckle proteins (SFPQ, NONO, PSPC1, RBM14, and MATR3) and NEAT1 RNA. Interacts with RBPMS; the interaction allows cooperative assembly of RNA-bound stable cell-specific alternative splicing regulatory complexes. In terms of tissue distribution, expressed in all tissues tested, including brain, heart, skeletal muscle, colon, thymus, spleen, kidney, liver, small intestine, placenta, lung and peripheral blood lymphocytes.

The protein localises to the nucleus. It is found in the nucleolus. Its subcellular location is the cytoplasm. In terms of biological role, isoform 1 may function as a nuclear receptor coactivator, enhancing transcription through other coactivators such as NCOA6 and CITED1. Isoform 2, functions as a transcriptional repressor, modulating transcriptional activities of coactivators including isoform 1, NCOA6 and CITED1. Regulates centriole biogenesis by suppressing the formation of aberrant centriolar protein complexes in the cytoplasm and thus preserving mitotic spindle integrity. Prevents the formation of the STIL-CPAP complex (which can induce the formation of aberrant centriolar protein complexes) by interfering with the interaction of STIL with CPAP. Plays a role in the regulation of DNA virus-mediated innate immune response by assembling into the HDP-RNP complex, a complex that serves as a platform for IRF3 phosphorylation and subsequent innate immune response activation through the cGAS-STING pathway. Also involved in the regulation of pre-mRNA alternative splicing. The polypeptide is RNA-binding protein 14 (RBM14) (Homo sapiens (Human)).